Consider the following 2998-residue polypeptide: Probable polyketide synthase 14 (2998 aa).

The 438-residue stretch at E19–E456 folds into the Ketosynthase family 3 (KS3) domain. Residues C189, H331, and H376 each act as for beta-ketoacyl synthase activity in the active site. Residues G657–Y690 are acyl/malonyl transferase. The active-site For acyl/malonyl transferase activity is the S667. Residues I962–N1084 form an N-terminal hotdog fold region. Residues I962–S1249 enclose the PKS/mFAS DH domain. H996 functions as the Proton acceptor; for dehydratase activity in the catalytic mechanism. Positions N1101–S1249 are C-terminal hotdog fold. Catalysis depends on D1159, which acts as the Proton donor; for dehydratase activity. Residues S1979–W1999 form a helical membrane-spanning segment. The 78-residue stretch at E2476–L2553 folds into the Carrier domain. S2513 bears the O-(pantetheine 4'-phosphoryl)serine mark. The interval D2559–K2578 is disordered. Residues Q2561–N2573 are compositionally biased toward low complexity. The helical transmembrane segment at I2621 to M2641 threads the bilayer.

Pantetheine 4'-phosphate is required as a cofactor.

It is found in the membrane. In terms of biological role, probable polyketide synthase. The polypeptide is Probable polyketide synthase 14 (pks14) (Dictyostelium discoideum (Social amoeba)).